The chain runs to 416 residues: Homogentisate 1,2-dioxygenase (416 aa).

The active-site Proton acceptor is His275. Residues His318 and Glu324 each contribute to the Fe cation site. Homogentisate contacts are provided by Tyr333 and His354. Fe cation is bound at residue His354.

This sequence belongs to the homogentisate dioxygenase family. In terms of assembly, hexamer; dimer of trimers. Requires Fe cation as cofactor.

It carries out the reaction homogentisate + O2 = 4-maleylacetoacetate + H(+). Its pathway is amino-acid degradation; L-phenylalanine degradation; acetoacetate and fumarate from L-phenylalanine: step 4/6. In terms of biological role, involved in the catabolism of homogentisate (2,5-dihydroxyphenylacetate or 2,5-OH-PhAc), a central intermediate in the degradation of phenylalanine and tyrosine. Catalyzes the oxidative ring cleavage of the aromatic ring of homogentisate to yield maleylacetoacetate. The protein is Homogentisate 1,2-dioxygenase of Legionella pneumophila (strain Lens).